A 151-amino-acid polypeptide reads, in one-letter code: Ribosomal RNA large subunit methyltransferase H (151 aa).

S-adenosyl-L-methionine contacts are provided by residues Leu73, Gly100, and 119–124 (LSDLTM).

Belongs to the RNA methyltransferase RlmH family. In terms of assembly, homodimer.

Its subcellular location is the cytoplasm. The catalysed reaction is pseudouridine(1915) in 23S rRNA + S-adenosyl-L-methionine = N(3)-methylpseudouridine(1915) in 23S rRNA + S-adenosyl-L-homocysteine + H(+). In terms of biological role, specifically methylates the pseudouridine at position 1915 (m3Psi1915) in 23S rRNA. The chain is Ribosomal RNA large subunit methyltransferase H from Aliarcobacter butzleri (strain RM4018) (Arcobacter butzleri).